Reading from the N-terminus, the 50-residue chain is uncharacterized protein (50 aa).

It localises to the mitochondrion. This is an uncharacterized protein from Saccharomyces cerevisiae (strain ATCC 204508 / S288c) (Baker's yeast).